Reading from the N-terminus, the 613-residue chain is Leucine aminopeptidase 2 (613 aa).

Residues 134 to 136 (QAQ) and 265 to 270 (PYGGME) each bind a peptide. Histidine 294 provides a ligand contact to Zn(2+). The active-site Proton acceptor is the glutamate 295. 2 residues coordinate Zn(2+): histidine 298 and glutamate 317. The active-site Proton donor is the tyrosine 382.

Belongs to the peptidase M1 family. Requires Zn(2+) as cofactor.

The protein localises to the cytoplasm. The protein resides in the nucleus. The catalysed reaction is an epoxide + H2O = an ethanediol. Aminopeptidase that preferentially cleaves di- and tripeptides. Also has low epoxide hydrolase activity (in vitro). Can hydrolyze the epoxide leukotriene LTA(4) but it forms preferentially 5,6-dihydroxy-7,9,11,14-eicosatetraenoic acid rather than the cytokine leukotriene B(4) as the product compared to the homologous mammalian enzyme (in vitro). The sequence is that of Leucine aminopeptidase 2 from Pyricularia oryzae (strain 70-15 / ATCC MYA-4617 / FGSC 8958) (Rice blast fungus).